A 799-amino-acid polypeptide reads, in one-letter code: Signal transducer and activator of transcription 5A (799 aa).

Y90 carries the phosphotyrosine modification. S128 carries the post-translational modification Phosphoserine. Residues 589 to 686 enclose the SH2 domain; it reads WNDGAILGFV…EVFSKYYTPV (98 aa). Residue Y682 is modified to Phosphotyrosine. At Y699 the chain carries Phosphotyrosine; by JAK2. Residues 778–799 are disordered; sequence DSLDPRLSPPAGLFASTRGSLS. The residue at position 785 (S785) is a Phosphoserine.

It belongs to the transcription factor STAT family. In terms of assembly, forms a homodimer or a heterodimer with a related family member. Binds NR3C1. Interacts with NCOA1 and SOCS7. Interacts with ERBB4. Interacts with EBF4. Interacts with CD69. ISGylated. Post-translationally, tyrosine phosphorylated in response to KITLG/SCF, IL2, IL3, IL7, IL15, CSF2/GMCSF, GH1, PRL, EPO and THPO. Activated KIT promotes phosphorylation on tyrosine residues and subsequent translocation to the nucleus. Tyrosine phosphorylated in response to constitutively activated FGFR1, FGFR2, FGFR3 and FGFR4. Tyrosine phosphorylation is required for DNA-binding activity and dimerization. Serine phosphorylation is also required for maximal transcriptional activity. Tyrosine phosphorylated in response to signaling via activated FLT3; wild-type FLT3 results in much weaker phosphorylation than constitutively activated mutant FLT3. Alternatively, can be phosphorylated by JAK2 at Tyr-699.

It localises to the cytoplasm. Its subcellular location is the nucleus. Its function is as follows. Carries out a dual function: signal transduction and activation of transcription. Mediates cellular responses to the cytokine KITLG/SCF and other growth factors. May mediate cellular responses to activated FGFR1, FGFR2, FGFR3 and FGFR4. Binds to the GAS element and activates PRL-induced transcription. Regulates the expression of milk proteins during lactation. The chain is Signal transducer and activator of transcription 5A (STAT5A) from Sus scrofa (Pig).